The sequence spans 192 residues: Fe/S biogenesis protein NfuA (192 aa).

[4Fe-4S] cluster contacts are provided by Cys-149 and Cys-152.

The protein belongs to the NfuA family. In terms of assembly, homodimer. The cofactor is [4Fe-4S] cluster.

Functionally, involved in iron-sulfur cluster biogenesis. Binds a 4Fe-4S cluster, can transfer this cluster to apoproteins, and thereby intervenes in the maturation of Fe/S proteins. Could also act as a scaffold/chaperone for damaged Fe/S proteins. The polypeptide is Fe/S biogenesis protein NfuA (Proteus mirabilis (strain HI4320)).